We begin with the raw amino-acid sequence, 199 residues long: 5'-deoxynucleotidase YfbR (199 aa).

Substrate contacts are provided by residues 18 to 19 (RW) and histidine 33. Positions 30–142 (VSEHSLQVAM…VKQADALCAY (113 aa)) constitute an HD domain. A divalent metal cation-binding residues include histidine 33, histidine 68, and aspartate 69. Substrate contacts are provided by residues aspartate 69, 77 to 80 (DLPT), and aspartate 137. Aspartate 137 contacts a divalent metal cation.

This sequence belongs to the 5DNU family. In terms of assembly, homodimer. A divalent metal cation serves as cofactor.

The protein localises to the cytoplasm. The catalysed reaction is a 2'-deoxyribonucleoside 5'-phosphate + H2O = a 2'-deoxyribonucleoside + phosphate. Its function is as follows. Catalyzes the strictly specific dephosphorylation of 2'-deoxyribonucleoside 5'-monophosphates. This is 5'-deoxynucleotidase YfbR from Shigella boydii serotype 18 (strain CDC 3083-94 / BS512).